The chain runs to 637 residues: 1-deoxy-D-xylulose-5-phosphate synthase (637 aa).

Thiamine diphosphate-binding positions include His88 and 129–131; that span reads GHS. Asp160 is a binding site for Mg(2+). Residues 161–162, Asn189, Phe293, and Glu370 contribute to the thiamine diphosphate site; that span reads GA. Asn189 serves as a coordination point for Mg(2+).

It belongs to the transketolase family. DXPS subfamily. In terms of assembly, homodimer. It depends on Mg(2+) as a cofactor. Thiamine diphosphate serves as cofactor.

The catalysed reaction is D-glyceraldehyde 3-phosphate + pyruvate + H(+) = 1-deoxy-D-xylulose 5-phosphate + CO2. Its pathway is metabolic intermediate biosynthesis; 1-deoxy-D-xylulose 5-phosphate biosynthesis; 1-deoxy-D-xylulose 5-phosphate from D-glyceraldehyde 3-phosphate and pyruvate: step 1/1. In terms of biological role, catalyzes the acyloin condensation reaction between C atoms 2 and 3 of pyruvate and glyceraldehyde 3-phosphate to yield 1-deoxy-D-xylulose-5-phosphate (DXP). This chain is 1-deoxy-D-xylulose-5-phosphate synthase, found in Acinetobacter baumannii (strain AYE).